The sequence spans 389 residues: Monomeric sarcosine oxidase (389 aa).

8–38 (DVIVVGAGSMGMAAGYYLSKQGVKTLLVDSF) is an FAD binding site. C318 carries the post-translational modification S-8alpha-FAD cysteine.

The protein belongs to the MSOX/MTOX family. MSOX subfamily. Monomer. FAD is required as a cofactor.

It localises to the cytoplasm. It catalyses the reaction sarcosine + O2 + H2O = formaldehyde + glycine + H2O2. Its function is as follows. Catalyzes the oxidative demethylation of sarcosine. This chain is Monomeric sarcosine oxidase (soxA), found in Arthrobacter sp. (strain TE1826).